A 154-amino-acid chain; its full sequence is tRNA-splicing endonuclease (154 aa).

Residues Tyr86, His102, and Lys133 contribute to the active site.

It belongs to the tRNA-intron endonuclease family. Archaeal short subfamily. As to quaternary structure, homotetramer; although the tetramer contains four active sites, only two participate in the cleavage. Therefore, it should be considered as a dimer of dimers.

The catalysed reaction is pretRNA = a 3'-half-tRNA molecule with a 5'-OH end + a 5'-half-tRNA molecule with a 2',3'-cyclic phosphate end + an intron with a 2',3'-cyclic phosphate and a 5'-hydroxyl terminus.. In terms of biological role, endonuclease that removes tRNA introns. Cleaves pre-tRNA at the 5'- and 3'-splice sites to release the intron. The products are an intron and two tRNA half-molecules bearing 2',3' cyclic phosphate and 5'-OH termini. Recognizes a pseudosymmetric substrate in which 2 bulged loops of 3 bases are separated by a stem of 4 bp. The polypeptide is tRNA-splicing endonuclease (Nanoarchaeum equitans (strain Kin4-M)).